We begin with the raw amino-acid sequence, 196 residues long: Protein TEX261 (196 aa).

Transmembrane regions (helical) follow at residues 3-23 (FMYLLSWLSLFIQVAFITLAV), 42-62 (SRIIKYMIWFSTAVLIGLYVF), 70-90 (IGVGLFTNLVYFGLLQTFPFI), 97-117 (FILSCGLVVVNHYLACQFFAE), and 125-145 (VLAYFTFCLWIIPFAFFVSLS).

Belongs to the SVP26 family.

It localises to the membrane. The protein is Protein TEX261 (TEX261) of Pongo abelii (Sumatran orangutan).